Consider the following 139-residue polypeptide: MDIISQLQEQVNTIAAITFNAFGTLQRDAPPVQLSPNYPEPPATTTVTDDATPFPEQPKQLSAGLVKAAKQFDALVAALPLSEGGEGAQLKRIAELQVENDLVGQELQKQLEAAEKELKQVQELFGQAADNCLNMKKPE.

The tract at residues D28–P58 is disordered. Low complexity predominate over residues A43–F54. Residues R92 to C132 are a coiled coil.

This sequence belongs to the Mediator complex subunit 21 family. Component of the Mediator complex. Interacts with HUB1.

The protein resides in the nucleus. In terms of biological role, component of the Mediator complex, a coactivator involved in the regulated transcription of nearly all RNA polymerase II-dependent genes. Mediator functions as a bridge to convey information from gene-specific regulatory proteins to the basal RNA polymerase II transcription machinery. Mediator is recruited to promoters by direct interactions with regulatory proteins and serves as a scaffold for the assembly of a functional preinitiation complex with RNA polymerase II and the general transcription factors. Required for embryo development and defense against necrotrophic fungal pathogens. The protein is Mediator of RNA polymerase II transcription subunit 21 (MED21) of Arabidopsis thaliana (Mouse-ear cress).